The following is a 292-amino-acid chain: Chondroitin proteoglycan 3 (292 aa).

Positions 1–17 (MRFVFIIALLLIGASLA) are cleaved as a signal peptide. The interval 28-103 (DVSASEDEFS…EGSGDTSPVV (76 aa)) is disordered. Positions 38-80 (GDSSGEISGESSGEASGEASGEASGEASGEASGESSGETSGES) are enriched in low complexity. Over residues 81-96 (SGDEETSGEGSGEEGS) the composition is skewed to acidic residues. Asn174 and Asn254 each carry an N-linked (GlcNAc...) asparagine glycan.

The protein is Chondroitin proteoglycan 3 of Caenorhabditis elegans.